A 644-amino-acid chain; its full sequence is Exoribonuclease 2 (644 aa).

The RNB domain occupies 189-516 (REDLTALNFV…NHRLLKAIIA (328 aa)). In terms of domain architecture, S1 motif spans 561–643 (DERFNAEIID…ETRSVIARPA (83 aa)).

It belongs to the RNR ribonuclease family. RNase II subfamily.

The protein resides in the cytoplasm. The catalysed reaction is Exonucleolytic cleavage in the 3'- to 5'-direction to yield nucleoside 5'-phosphates.. In terms of biological role, involved in mRNA degradation. Hydrolyzes single-stranded polyribonucleotides processively in the 3' to 5' direction. In Serratia proteamaculans (strain 568), this protein is Exoribonuclease 2.